The following is a 159-amino-acid chain: Putative 2'-deoxynucleoside 5'-phosphate N-hydrolase 1 (159 aa).

Residues 25–31 (FLSGSIR), tyrosine 40, histidine 58, glutamate 104, and 126–128 (SAM) each bind substrate.

It belongs to the 2'-deoxynucleoside 5'-phosphate N-hydrolase 1 family. In terms of assembly, monomer and homodimer.

The catalysed reaction is a pyrimidine 2'-deoxyribonucleoside 5'-phosphate + H2O = a pyrimidine nucleobase + 2-deoxy-D-ribose 5-phosphate. It carries out the reaction a purine 2'-deoxyribonucleoside 5'-phosphate + H2O = a purine nucleobase + 2-deoxy-D-ribose 5-phosphate. Catalyzes the cleavage of the N-glycosidic bond of deoxyribonucleoside 5'-monophosphates to yield deoxyribose 5-phosphate and a purine or pyrimidine base. The polypeptide is Putative 2'-deoxynucleoside 5'-phosphate N-hydrolase 1 (Methanosarcina barkeri (strain Fusaro / DSM 804)).